The sequence spans 206 residues: Sclerostin domain-containing protein 1 (206 aa).

The signal sequence occupies residues 1–23 (MLPPAIHLSLIPLLCILMRNCLA). Residues 42–62 (AHPSSNSTLNQARNGGRHFSS) are disordered. Positions 44–62 (PSSNSTLNQARNGGRHFSS) are enriched in polar residues. N-linked (GlcNAc...) asparagine glycosylation is present at asparagine 47. Cystine bridges form between cysteine 75–cysteine 133, cysteine 89–cysteine 147, cysteine 100–cysteine 163, and cysteine 104–cysteine 165. In terms of domain architecture, CTCK spans 75–170 (CRELRSTKYI…TACKCKRYTR (96 aa)). An N-linked (GlcNAc...) asparagine glycan is attached at asparagine 173. Residues 176–206 (SHNFESVSPAKPAQHHRERKRASKSSKHSLS) are disordered. The span at 188-206 (AQHHRERKRASKSSKHSLS) shows a compositional bias: basic residues.

Belongs to the sclerostin family. As to quaternary structure, interacts with BMP2, BMP4, BMP6 and BMP7 with high affinity. Highly expressed in kidney at renal collecting ducts level and weakly in brain.

The protein localises to the secreted. May be involved in the onset of endometrial receptivity for implantation/sensitization for the decidual cell reaction. Enhances Wnt signaling and inhibits TGF-beta signaling. Directly antagonizes activity of BMP2, BMP4, BMP6 and BMP7 in a dose-dependent manner. The sequence is that of Sclerostin domain-containing protein 1 (Sostdc1) from Mus musculus (Mouse).